A 165-amino-acid polypeptide reads, in one-letter code: MSLPEKAFPVSWDQFHRDARALAWRLADNGQEWRAMVCITRGGLVPAAIVSRELNIRMIETVCIASYHDYDTQGQMKVLKSISPEIAKSGGEGVLIVDDLTDTGKTAAEVRAMLPKAHFAAVYAKPKGRPLVDTFVTEVSQDTWIYFPWDLGFTYQEPIAKGTRG.

Residues 41 to 42 (RG) and 98 to 106 (DDLTDTGKT) contribute to the 5-phospho-alpha-D-ribose 1-diphosphate site. Asp99 provides a ligand contact to Mg(2+). Guanine-binding residues include Asp102 and Ile145. Residues Asp102 and Ile145 each coordinate xanthine. GMP-binding positions include 102–106 (DTGKT) and 144–145 (WI).

Belongs to the purine/pyrimidine phosphoribosyltransferase family. XGPT subfamily. As to quaternary structure, homotetramer. Mg(2+) is required as a cofactor.

It is found in the cell inner membrane. It catalyses the reaction GMP + diphosphate = guanine + 5-phospho-alpha-D-ribose 1-diphosphate. The catalysed reaction is XMP + diphosphate = xanthine + 5-phospho-alpha-D-ribose 1-diphosphate. The enzyme catalyses IMP + diphosphate = hypoxanthine + 5-phospho-alpha-D-ribose 1-diphosphate. The protein operates within purine metabolism; GMP biosynthesis via salvage pathway; GMP from guanine: step 1/1. It functions in the pathway purine metabolism; XMP biosynthesis via salvage pathway; XMP from xanthine: step 1/1. Its function is as follows. Purine salvage pathway enzyme that catalyzes the transfer of the ribosyl-5-phosphate group from 5-phospho-alpha-D-ribose 1-diphosphate (PRPP) to the N9 position of the 6-oxopurines guanine and xanthine to form the corresponding ribonucleotides GMP (guanosine 5'-monophosphate) and XMP (xanthosine 5'-monophosphate), with the release of PPi. To a lesser extent, also acts on hypoxanthine. This is Xanthine-guanine phosphoribosyltransferase from Sinorhizobium medicae (strain WSM419) (Ensifer medicae).